A 795-amino-acid chain; its full sequence is Serine/threonine-protein kinase MARK1 (795 aa).

A disordered region spans residues 1 to 41 (MSARTPLPTVNERDTENHTSVDGYTETHIPPAKSSSRQNLP). Phosphothreonine is present on threonine 5. Residues 60 to 311 (YRLQKTIGKG…LEQIMKDRWM (252 aa)) enclose the Protein kinase domain. ATP is bound by residues 66 to 74 (IGKGNFAKV) and lysine 89. Aspartate 182 acts as the Proton acceptor in catalysis. Threonine 208 carries the post-translational modification Phosphothreonine. The residue at position 215 (threonine 215) is a Phosphothreonine; by LKB1 and TAOK1. At serine 219 the chain carries Phosphoserine; by GSK3-beta. Positions 329 to 370 (DLSDAKRIDIMVTMGFARDEINDALVSQKYDEVMATYILLGR) constitute a UBA domain. Disordered stretches follow at residues 377-498 (GGES…SGGS) and 518-699 (QNGR…KPRS). Phosphoserine is present on residues serine 382, serine 390, serine 393, serine 403, serine 423, and serine 444. A compositionally biased stretch (polar residues) spans 387-403 (CQRSRPSSDLNNSTLQS). Residues 447-459 (SEQKEEWGKDTAR) are compositionally biased toward basic and acidic residues. Residues 462–473 (GSTTVGSKSEVT) are compositionally biased toward polar residues. Serine 475 carries the phosphoserine modification. Positions 486–495 (TASPSNNVYS) are enriched in polar residues. Composition is skewed to low complexity over residues 523 to 547 (SSLTEMSASSMSSAGSTVASAGPSA) and 585 to 599 (PAASPSAHSISASTP). Serine 588 carries the phosphoserine modification. Phosphothreonine; by PKC/PRKCZ is present on threonine 613. Residues 647–657 (GTSTGIISKIT) are compositionally biased toward polar residues. Composition is skewed to basic and acidic residues over residues 661–676 (VRRDPSEGEASGRADT) and 683–697 (DPKERDKDEGKEAKP). Residue serine 666 is modified to Phosphoserine. In terms of domain architecture, KA1 spans 746–795 (DARQDSLVQWEMEVCKLPRLSLNGVRFKRISGTSIAFKNIASKIANELKL).

The protein belongs to the protein kinase superfamily. CAMK Ser/Thr protein kinase family. SNF1 subfamily. Interacts with MAPT/TAU. Requires Mg(2+) as cofactor. Post-translationally, phosphorylated at Thr-215 by STK11/LKB1 in complex with STE20-related adapter-alpha (STRADA) pseudo kinase and CAB39. Phosphorylation at Thr-215 by TAOK1 activates the kinase activity, leading to phosphorylation and detachment of MAPT/TAU from microtubules. Phosphorylation at Ser-219 by GSK3-beta (GSK3B) inhibits the kinase activity. Phosphorylation at Thr-613 by PRKCZ/aPKC in polarized epithelial cells inhibits the kinase activity.

It localises to the cell membrane. It is found in the cytoplasm. Its subcellular location is the cytoskeleton. The protein resides in the cell projection. The protein localises to the dendrite. The enzyme catalyses L-seryl-[protein] + ATP = O-phospho-L-seryl-[protein] + ADP + H(+). The catalysed reaction is L-threonyl-[protein] + ATP = O-phospho-L-threonyl-[protein] + ADP + H(+). It catalyses the reaction L-seryl-[tau protein] + ATP = O-phospho-L-seryl-[tau protein] + ADP + H(+). It carries out the reaction L-threonyl-[tau protein] + ATP = O-phospho-L-threonyl-[tau protein] + ADP + H(+). With respect to regulation, inhibited by phosphorylation at Ser-219. Activated by phosphorylation on Thr-215. Serine/threonine-protein kinase. Involved in cell polarity and microtubule dynamics regulation. Phosphorylates DCX, MAP2 and MAP4. Phosphorylates the microtubule-associated protein MAPT/TAU. Involved in cell polarity by phosphorylating the microtubule-associated proteins MAP2, MAP4 and MAPT/TAU at KXGS motifs, causing detachment from microtubules, and their disassembly. Involved in the regulation of neuronal migration through its dual activities in regulating cellular polarity and microtubule dynamics, possibly by phosphorylating and regulating DCX. Also acts as a positive regulator of the Wnt signaling pathway, probably by mediating phosphorylation of dishevelled proteins (DVL1, DVL2 and/or DVL3). This Mus musculus (Mouse) protein is Serine/threonine-protein kinase MARK1.